We begin with the raw amino-acid sequence, 671 residues long: Palmitoleoyl-protein carboxylesterase NOTUM (671 aa).

A signal peptide spans 1–46 (MAVEQIDKMAAKAGEATNKWIKPQQPLLTLLLLLATFSQLPAVCSS). Residue Asn95 is glycosylated (N-linked (GlcNAc...) asparagine). Residues Ser237 and Asp338 each act as charge relay system in the active site. Asn372 is a glycosylation site (N-linked (GlcNAc...) asparagine). Residue His384 is the Charge relay system of the active site. The segment at 411–592 (HSTRSRRHDK…TKSKKRHRVP (182 aa)) is disordered. Residues 439–454 (NQRHQRHRQRLQRQKH) show a composition bias toward basic residues. A compositionally biased stretch (basic and acidic residues) spans 470-486 (LSKEEREERKRLRQEQR). Residues 487–497 (QRRKQRRRQQQ) are compositionally biased toward basic residues. Positions 505–514 (QEHRNKKDNS) are enriched in basic and acidic residues. Residues 570-583 (PQKTRSSNNASAGT) are compositionally biased toward polar residues. Asn578 and Asn612 each carry an N-linked (GlcNAc...) asparagine glycan.

Belongs to the pectinacetylesterase family. Notum subfamily.

It is found in the secreted. The protein resides in the cell surface. The catalysed reaction is [Wnt protein]-O-(9Z)-hexadecenoyl-L-serine + H2O = [Wnt protein]-L-serine + (9Z)-hexadecenoate + H(+). Carboxylesterase that acts as a key negative regulator of the Wnt signaling pathway by specifically mediating depalmitoleoylation of WNT proteins. Serine palmitoleoylation of WNT proteins is required for efficient binding to frizzled receptors. Also acts as a regulator of long-range activity of Hedgehog (hh), possibly by regulating the switch between low and high level hh pathway signaling. This Drosophila melanogaster (Fruit fly) protein is Palmitoleoyl-protein carboxylesterase NOTUM.